Here is a 544-residue protein sequence, read N- to C-terminus: Fructose dehydrogenase large subunit (544 aa).

Gly-14 to Gly-30 is an FAD binding site. The Proton acceptor role is filled by His-478.

It belongs to the GMC oxidoreductase family. In terms of assembly, heterotrimer composed of FdhL, FdhS and FdhC. FAD is required as a cofactor.

The protein localises to the cell membrane. It catalyses the reaction keto-D-fructose + a ubiquinone = 5-dehydro-D-fructose + a ubiquinol. Its function is as follows. Catalytic subunit of fructose dehydrogenase, an enzyme that catalyzes the oxidation of D-fructose to produce 5-keto-D-fructose. The chain is Fructose dehydrogenase large subunit (fdhL) from Gluconobacter japonicus.